Here is a 370-residue protein sequence, read N- to C-terminus: Gap junction delta-4 protein (370 aa).

Topologically, residues 1–19 (MEGVDLLGFLIITLNCNVT) are cytoplasmic. Residues 20–40 (MVGKLWFVLTMLLRMLVIVLA) traverse the membrane as a helical segment. Residues 41–76 (GRPVYQDEQERFVCNTLQPGCANVCYDVFSPVSHLR) are Extracellular-facing. The chain crosses the membrane as a helical span at residues 77–97 (FWLIQGVCVLLPSAVFSVYVL). Residues 98–146 (HRGATLAALGPRRCPDPREPASGQRRCPRPFGERGGLQVPDFSAGYIIH) are Cytoplasmic-facing. The helical transmembrane segment at 147–167 (LLLRTLLEAAFGALHYFLFGF) threads the bilayer. Residues 168 to 196 (LAPKKFPCTRPPCTGVVDCYVSRPTEKSL) lie on the Extracellular side of the membrane. Residues 197 to 217 (LMLFLWAVSALSFLLGLADLV) form a helical membrane-spanning segment. Residues 218–370 (CSLRRRMRRR…HLRARKSEWV (153 aa)) lie on the Cytoplasmic side of the membrane. A disordered region spans residues 224-370 (MRRRPGPPTS…HLRARKSEWV (147 aa)). The segment covering 246–260 (AEGRRTDEEGGREEE) has biased composition (basic and acidic residues). Low complexity predominate over residues 331–346 (PSAAPSRLAAPPSCSS).

It belongs to the connexin family. Delta-type subfamily. As to quaternary structure, a connexon is composed of a hexamer of connexins. In terms of tissue distribution, expressed in pancreas, kidney, skeletal muscle, liver, placenta, and heart.

It localises to the cell membrane. Its subcellular location is the cell junction. The protein localises to the gap junction. Its function is as follows. One gap junction consists of a cluster of closely packed pairs of transmembrane channels, the connexons, through which materials of low MW diffuse from one cell to a neighboring cell. This is Gap junction delta-4 protein (GJD4) from Homo sapiens (Human).